The primary structure comprises 151 residues: Nascent polypeptide-associated complex subunit beta (151 aa).

The NAC-A/B domain maps to 32 to 97; that stretch reads EQDDTKLMEA…PQEKDVTQLI (66 aa). Positions 122–151 are disordered; sequence GKTPSMGGENAGADEDIPDLIEGQKFDEVE.

It belongs to the NAC-beta family. As to quaternary structure, part of the nascent polypeptide-associated complex (NAC), consisting of EGD2 and EGD1. NAC associates with ribosomes via EGD1.

The protein resides in the cytoplasm. Its subcellular location is the nucleus. Its function is as follows. Component of the nascent polypeptide-associated complex (NAC), a dynamic component of the ribosomal exit tunnel, protecting the emerging polypeptides from interaction with other cytoplasmic proteins to ensure appropriate nascent protein targeting. The NAC complex also promotes mitochondrial protein import by enhancing productive ribosome interactions with the outer mitochondrial membrane and blocks the inappropriate interaction of ribosomes translating non-secretory nascent polypeptides with translocation sites in the membrane of the endoplasmic reticulum. EGD1 may act as a transcription factor that exert a negative effect on the expression of several genes that are transcribed by RNA polymerase II. This chain is Nascent polypeptide-associated complex subunit beta (EGD1), found in Meyerozyma guilliermondii (strain ATCC 6260 / CBS 566 / DSM 6381 / JCM 1539 / NBRC 10279 / NRRL Y-324) (Yeast).